The primary structure comprises 1490 residues: ABC transporter CDR4 (1490 aa).

A compositionally biased stretch (polar residues) spans 1 to 12 (MADADTSSNSSK). Disordered regions lie at residues 1-26 (MADADTSSNSSKTNEDRSQEGFGTYQ) and 53-75 (LKRQHSRQESQKSNEQESELSGK). The Cytoplasmic segment spans residues 1–516 (MADADTSSNS…NILRIKGNPS (516 aa)). Over residues 58–67 (SRQESQKSNE) the composition is skewed to basic and acidic residues. The 257-residue stretch at 151–407 (PKYLSLFFRE…FIDMGYECPQ (257 aa)) folds into the ABC transporter 1 domain. 6 consecutive transmembrane segments (helical) span residues 517-537 (IHLFQIFGNIGMSFILSSIFY), 551-571 (AALFFAVLFNAFSCLLEIFSL), 601-621 (LPTKFIIAIGFNLVYYFMVNF), 626-646 (GNFFFYLLINFSATLAMSHIF), 659-679 (AMTPAAILLLALTIFTGFVIP), and 767-787 (FGIVIGFIVFFFCTYILLCEI). The Cytoplasmic segment spans residues 788–1182 (NKGAMQKGEI…VFEQNWRTPS (395 aa)). The 245-residue stretch at 846 to 1090 (FFWRDLTYQV…LINYFEKYGA (245 aa)) folds into the ABC transporter 2 domain. 882 to 889 (GASGAGKT) provides a ligand contact to ATP. 3 helical membrane passes run 1183 to 1203 (YLYSKFLLVVTSSLFNGFSFY), 1217 to 1237 (FSVFMFLVILHTLIQQYLPTF), and 1268 to 1288 (IPWNIICGTLGYFCWYYPVGL). An N-linked (GlcNAc...) asparagine glycan is attached at N1291. 3 consecutive transmembrane segments (helical) span residues 1304–1324 (FMWFAIVLFFIYTSTLAQLCI), 1333–1353 (AANLSVLLFTMCLAFCGVLVT), and 1370–1390 (FTYLVSVMLSVGLVDAPVTCA). An N-linked (GlcNAc...) asparagine glycan is attached at N1424. A helical transmembrane segment spans residues 1455-1475 (IGIYIAFIGINIIGTFILYWF).

The protein belongs to the ABC transporter superfamily. ABCG family. PDR (TC 3.A.1.205) subfamily.

The protein resides in the membrane. The chain is ABC transporter CDR4 (CDR4) from Candida albicans (Yeast).